The following is a 357-amino-acid chain: MYKIAVLPGDGIGPEIVPEAVKVLEAVSRRVGIEFQFTEALVGGAAIDARGIALPPETLELCRQSDAVLLGAVGGPKWDTLPPAERPETAALLPLRKELGLYANLRPAFLYDSLVEASPLKKEIVTGTDLIIVRELTGGLYFGAKKREQTAEGEMAYDTMYYTRAEIERIVRLAFTIARQRRCHLTSVDKANVLTTSRLWRDTVEDIKGEFPEVTVEHMYVDNCAMQLVRRPAQFDVIVTENTFGDILSDQASVLTGSIGMLPSASIGGAVALYEPCHGSAPDIAGQQKANPLATILSAAMMLKYSFKMDQAAAAIEAAVGRVLAKGYRTPDLYVPGTQLVGTAEMGQLVRRELEEG.

Residue 75 to 88 (GPKWDTLPPAERPE) coordinates NAD(+). Substrate-binding residues include R96, R106, R134, and D222. Mg(2+) is bound by residues D222, D246, and D250. 279–291 (GSAPDIAGQQKAN) is an NAD(+) binding site.

It belongs to the isocitrate and isopropylmalate dehydrogenases family. LeuB type 1 subfamily. Homodimer. Mg(2+) is required as a cofactor. Mn(2+) serves as cofactor.

Its subcellular location is the cytoplasm. The enzyme catalyses (2R,3S)-3-isopropylmalate + NAD(+) = 4-methyl-2-oxopentanoate + CO2 + NADH. It participates in amino-acid biosynthesis; L-leucine biosynthesis; L-leucine from 3-methyl-2-oxobutanoate: step 3/4. Catalyzes the oxidation of 3-carboxy-2-hydroxy-4-methylpentanoate (3-isopropylmalate) to 3-carboxy-4-methyl-2-oxopentanoate. The product decarboxylates to 4-methyl-2 oxopentanoate. This Moorella thermoacetica (strain ATCC 39073 / JCM 9320) protein is 3-isopropylmalate dehydrogenase.